The chain runs to 88 residues: Large ribosomal subunit protein bL27 (88 aa).

The segment at 1-24 is disordered; the sequence is MATKKSGGSSGNGRDSRGRRLGVK.

The protein belongs to the bacterial ribosomal protein bL27 family.

This Ehrlichia chaffeensis (strain ATCC CRL-10679 / Arkansas) protein is Large ribosomal subunit protein bL27.